A 1000-amino-acid polypeptide reads, in one-letter code: UPF0182 protein SCO5204 (1000 aa).

Helical transmembrane passes span 26 to 48, 70 to 92, 121 to 143, 177 to 199, 220 to 237, 267 to 289, and 296 to 318; these read LLLT…GFWT, IGLF…WLAH, WLLL…GQWR, FLLG…THYL, LSVL…AYWL, LPAK…ATLW, and PVIG…PALV. 2 disordered regions span residues 884–908 and 943–1000; these read AETE…NPTV and EALQ…ADTG. Over residues 888-897 the composition is skewed to acidic residues; sequence QPPDEGDDTT. Composition is skewed to basic and acidic residues over residues 943 to 953 and 963 to 984; these read EALQRAEDAQA and NGDD…DKAG.

Belongs to the UPF0182 family.

It is found in the cell membrane. The protein is UPF0182 protein SCO5204 of Streptomyces coelicolor (strain ATCC BAA-471 / A3(2) / M145).